The sequence spans 97 residues: YcgL domain-containing protein Pfl01_1389 (97 aa).

In terms of domain architecture, YcgL spans 3–87; it reads RICSIYQSSK…AEEEYIEHLP (85 aa).

The polypeptide is YcgL domain-containing protein Pfl01_1389 (Pseudomonas fluorescens (strain Pf0-1)).